We begin with the raw amino-acid sequence, 206 residues long: Urease accessory protein UreE (206 aa).

A disordered region spans residues 136–206 (PEGGAYAEPS…HGHAHAHDRK (71 aa)). 2 stretches are compositionally biased toward basic and acidic residues: residues 148–169 (QGHD…GGHE) and 177–191 (HGHA…EHCG). Residues 192–206 (HGHHHHGHAHAHDRK) show a composition bias toward basic residues.

The protein belongs to the UreE family.

The protein localises to the cytoplasm. Its function is as follows. Involved in urease metallocenter assembly. Binds nickel. Probably functions as a nickel donor during metallocenter assembly. The polypeptide is Urease accessory protein UreE (Bradyrhizobium sp. (strain BTAi1 / ATCC BAA-1182)).